The sequence spans 187 residues: Meiotically up-regulated protein C1442.13c (187 aa).

Disordered stretches follow at residues 15–46 (QWEN…LSNE) and 119–145 (IQEG…PAIN). A compositionally biased stretch (basic residues) spans 26-41 (PPRKPKIVQPKKKPSK). Positions 145 to 187 (NNGKGKQLLEMMGWSRGKGLGSENQGMVDPVVAVVKNNKQGLH) constitute a G-patch domain.

The protein localises to the nucleus. It localises to the cytoplasm. The protein resides in the cytoskeleton. It is found in the microtubule organizing center. Its subcellular location is the spindle pole body. Its function is as follows. Has a role in meiosis and sporulation. Required for meiotic chromosome segregation. This Schizosaccharomyces pombe (strain 972 / ATCC 24843) (Fission yeast) protein is Meiotically up-regulated protein C1442.13c.